The following is a 500-amino-acid chain: Endothelial lipase (500 aa).

An N-terminal signal peptide occupies residues 1-20 (MRNTVFLLGFWSVYCYFPAG). Cys-64 and Cys-77 form a disulfide bridge. N-linked (GlcNAc...) asparagine glycans are attached at residues Asn-65, Asn-80, and Asn-136. Residue Ser-169 is the Nucleophile of the active site. Residue Asp-193 is the Charge relay system of the active site. A disulfide bond links Cys-252 and Cys-272. Residue His-274 is the Charge relay system of the active site. 2 disulfide bridges follow: Cys-297–Cys-316 and Cys-308–Cys-311. 325 to 337 (KMRKKRNSKMYLK) is a heparin binding site. The PLAT domain maps to 347–482 (YHYQLKVHMF…SPGQELWFHK (136 aa)). Asn-359 and Asn-393 each carry an N-linked (GlcNAc...) asparagine glycan. Cysteines 463 and 483 form a disulfide. N-linked (GlcNAc...) asparagine glycosylation occurs at Asn-491.

It belongs to the AB hydrolase superfamily. Lipase family. In terms of assembly, head to tail homodimer. As to expression, expressed in placenta, lung, liver, testis and spleen.

Its subcellular location is the secreted. The enzyme catalyses a triacylglycerol + H2O = a diacylglycerol + a fatty acid + H(+). The catalysed reaction is a 1,2-diacyl-sn-glycero-3-phosphocholine + H2O = a 2-acyl-sn-glycero-3-phosphocholine + a fatty acid + H(+). It catalyses the reaction 1,2,3-tri-(9Z-octadecenoyl)-glycerol + H2O = di-(9Z)-octadecenoylglycerol + (9Z)-octadecenoate + H(+). It carries out the reaction 1,2,3-tributanoylglycerol + H2O = dibutanoylglycerol + butanoate + H(+). The enzyme catalyses 1,2-dihexadecanoyl-sn-glycero-3-phosphocholine + H2O = hexadecanoyl-sn-glycero-3-phosphocholine + hexadecanoate + H(+). Its function is as follows. Exerts both phospholipase and triglyceride lipase activities. More active as a phospholipase than a triglyceride lipase. Hydrolyzes triglycerides, both with short-chain fatty acyl groups (tributyrin) and long-chain fatty acyl groups (triolein) with similar levels of activity toward both types of substrates. Hydrolyzes high density lipoproteins (HDL) more efficiently than other lipoproteins. This is Endothelial lipase (Lipg) from Mus musculus (Mouse).